The chain runs to 382 residues: Succinate--CoA ligase [ADP-forming] subunit beta (382 aa).

Residues 9 to 240 (KELLKKYGLP…ITQIDPLEVE (232 aa)) form the ATP-grasp domain. Residues Lys-46, Glu-98, Thr-101, and Glu-106 each coordinate ATP. Mg(2+) is bound by residues Asn-195 and Asp-209. Substrate-binding positions include Asn-260 and 317–319 (GIL).

Belongs to the succinate/malate CoA ligase beta subunit family. In terms of assembly, heterotetramer of two alpha and two beta subunits. The cofactor is Mg(2+).

It carries out the reaction succinate + ATP + CoA = succinyl-CoA + ADP + phosphate. The enzyme catalyses GTP + succinate + CoA = succinyl-CoA + GDP + phosphate. Its pathway is carbohydrate metabolism; tricarboxylic acid cycle; succinate from succinyl-CoA (ligase route): step 1/1. In terms of biological role, succinyl-CoA synthetase functions in the citric acid cycle (TCA), coupling the hydrolysis of succinyl-CoA to the synthesis of either ATP or GTP and thus represents the only step of substrate-level phosphorylation in the TCA. The beta subunit provides nucleotide specificity of the enzyme and binds the substrate succinate, while the binding sites for coenzyme A and phosphate are found in the alpha subunit. This Hydrogenobaculum sp. (strain Y04AAS1) protein is Succinate--CoA ligase [ADP-forming] subunit beta.